Here is a 274-residue protein sequence, read N- to C-terminus: NH(3)-dependent NAD(+) synthetase (274 aa).

46–53 is an ATP binding site; the sequence is GISGGQDS. Mg(2+) is bound at residue Asp-52. Arg-140 contributes to the deamido-NAD(+) binding site. Thr-160 provides a ligand contact to ATP. Glu-165 contributes to the Mg(2+) binding site. Deamido-NAD(+) is bound by residues Lys-173 and Asp-180. ATP contacts are provided by Lys-189 and Thr-211. 260 to 261 contacts deamido-NAD(+); that stretch reads HK.

It belongs to the NAD synthetase family. As to quaternary structure, homodimer.

It catalyses the reaction deamido-NAD(+) + NH4(+) + ATP = AMP + diphosphate + NAD(+) + H(+). Its pathway is cofactor biosynthesis; NAD(+) biosynthesis; NAD(+) from deamido-NAD(+) (ammonia route): step 1/1. Its function is as follows. Catalyzes the ATP-dependent amidation of deamido-NAD to form NAD. Uses ammonia as a nitrogen source. The polypeptide is NH(3)-dependent NAD(+) synthetase (Listeria welshimeri serovar 6b (strain ATCC 35897 / DSM 20650 / CCUG 15529 / CIP 8149 / NCTC 11857 / SLCC 5334 / V8)).